A 359-amino-acid polypeptide reads, in one-letter code: Peptide chain release factor 1 (359 aa).

The residue at position 235 (Gln235) is an N5-methylglutamine. The interval 282–306 is disordered; that stretch reads RQRADSERSADRKSQVGSGDRSERI.

The protein belongs to the prokaryotic/mitochondrial release factor family. Methylated by PrmC. Methylation increases the termination efficiency of RF1.

The protein resides in the cytoplasm. In terms of biological role, peptide chain release factor 1 directs the termination of translation in response to the peptide chain termination codons UAG and UAA. This Rhizobium rhizogenes (strain K84 / ATCC BAA-868) (Agrobacterium radiobacter) protein is Peptide chain release factor 1.